Here is a 187-residue protein sequence, read N- to C-terminus: V-type ATP synthase subunit E (187 aa).

The protein belongs to the V-ATPase E subunit family.

Functionally, produces ATP from ADP in the presence of a proton gradient across the membrane. The protein is V-type ATP synthase subunit E of Clostridioides difficile (strain 630) (Peptoclostridium difficile).